A 216-amino-acid chain; its full sequence is MNHIFRRSIPITARLPSLGIRSLATATASAHPPVQLYGLDGSYASSLYTAAVKESKLDNVEKALNKLSGVLQQRPEFEQYISSPWLTREDKKILVSSLTQMTGNEPLLKNFYNVLLDNHRLYLLTRIQKQFSTLMRAKRGEIEVKITSATPLDSKILSRLESRIAKSKYGKGKLLVSNKVTPSIIGGLIVEIGDNILDVSVGSRLNNLNKLLSEPI.

The protein belongs to the ATPase delta chain family. As to quaternary structure, F-type ATPases have 2 components, CF(1) - the catalytic core - and CF(0) - the membrane proton channel. CF(1) has five subunits: alpha(3), beta(3), gamma(1), delta(1), epsilon(1). CF(0) has three main subunits: a, b and c.

Its subcellular location is the mitochondrion. The protein resides in the mitochondrion inner membrane. Functionally, mitochondrial membrane ATP synthase (F(1)F(0) ATP synthase or Complex V) produces ATP from ADP in the presence of a proton gradient across the membrane which is generated by electron transport complexes of the respiratory chain. F-type ATPases consist of two structural domains, F(1) - containing the extramembraneous catalytic core and F(0) - containing the membrane proton channel, linked together by a central stalk and a peripheral stalk. During catalysis, ATP synthesis in the catalytic domain of F(1) is coupled via a rotary mechanism of the central stalk subunits to proton translocation. Part of the complex F(0) domain and the peripheric stalk, which acts as a stator to hold the catalytic alpha(3)beta(3) subcomplex and subunit a/ATP6 static relative to the rotary elements. This chain is ATP synthase subunit 5, mitochondrial (atp5), found in Schizosaccharomyces pombe (strain 972 / ATCC 24843) (Fission yeast).